Reading from the N-terminus, the 351-residue chain is Probable cell division control protein 7 homolog 1 (351 aa).

Positions Tyr21 to Phe341 constitute a Protein kinase domain. ATP is bound by residues Ile27–Val35 and Lys50. Asp137 serves as the catalytic Proton acceptor.

The protein belongs to the protein kinase superfamily. Ser/Thr protein kinase family. CDC7 subfamily. Mg(2+) serves as cofactor.

It carries out the reaction L-seryl-[protein] + ATP = O-phospho-L-seryl-[protein] + ADP + H(+). It catalyses the reaction L-threonyl-[protein] + ATP = O-phospho-L-threonyl-[protein] + ADP + H(+). In terms of biological role, serine/threonine-protein kinase. Needed for the initiation of DNA synthesis during mitosis as well as for synaptonemal complex formation and commitment to recombination during meiosis. This is Probable cell division control protein 7 homolog 1 (CDC7-1) from Encephalitozoon cuniculi (strain GB-M1) (Microsporidian parasite).